A 196-amino-acid chain; its full sequence is Nucleoid occlusion factor SlmA (196 aa).

One can recognise an HTH tetR-type domain in the interval 7–68 (SNRREEILQA…GLIEFIEEAL (62 aa)). Residues 31-50 (TTVKLAKQVGVSEAALYRHF) constitute a DNA-binding region (H-T-H motif). Residues 65 to 142 (EEALMSRINR…QLRQILRERK (78 aa)) are a coiled coil.

It belongs to the nucleoid occlusion factor SlmA family. In terms of assembly, homodimer. Interacts with FtsZ.

It is found in the cytoplasm. It localises to the nucleoid. Required for nucleoid occlusion (NO) phenomenon, which prevents Z-ring formation and cell division over the nucleoid. Acts as a DNA-associated cell division inhibitor that binds simultaneously chromosomal DNA and FtsZ, and disrupts the assembly of FtsZ polymers. SlmA-DNA-binding sequences (SBS) are dispersed on non-Ter regions of the chromosome, preventing FtsZ polymerization at these regions. The chain is Nucleoid occlusion factor SlmA from Vibrio atlanticus (strain LGP32) (Vibrio splendidus (strain Mel32)).